The following is a 95-amino-acid chain: RING finger protein Z (95 aa).

The segment covering 1–16 (MGNSKSKSNPSSSSES) has biased composition (low complexity). A disordered region spans residues 1–23 (MGNSKSKSNPSSSSESQKGAPTV). Gly-2 is lipidated: N-myristoyl glycine; by host. Residues 40-76 (CKCCWFADKNLIKCSDHYLCLRCLNVMLKNSDLCNIC) form an RING-type; atypical zinc finger. The PTAP/PSAP motif signature appears at 90–93 (PSAP).

The protein belongs to the arenaviridae Z protein family. In terms of assembly, interacts with protein NP; this interaction probably directs the encapsidated genome to budding sites. Interacts (via RING domain) with polymerase L; this interaction inhibits viral transcription and replication, Z partially blocks the product exit tunnel for the releasing nascent RNA product. Interacts with the glycoprotein complex; this interaction plays a role in virion budding. Interacts with host eIF4E; this interaction results in eIF4E reduced affinity for its substrate, the 5'-m7 G cap structure. Interacts (via late-budding domain) with host TSG101; this interaction is essential for budding and release of viral particles. Interacts with host RPLP0; this interaction may serve to load ribosome-like particles inside the virion. Interacts with host PML; this interaction induces PML bodies redistribution in the cytoplasm upon viral infection. Myristoylation is required for the role of RING finger protein Z in assembly and budding.

The protein localises to the virion. It localises to the host cytoplasm. Its subcellular location is the host perinuclear region. The protein resides in the host cell membrane. Its function is as follows. Plays a crucial role in virion assembly and budding. Expressed late in the virus life cycle, it acts as an inhibitor of viral transcription and RNA synthesis by interacting with the viral polymerase L. Presumably recruits the NP encapsidated genome to cellular membranes at budding sites via direct interaction with NP. Plays critical roles in the final steps of viral release by interacting with host TSG101, a member of the vacuolar protein-sorting pathway and using other cellular host proteins involved in vesicle formation pathway. The budding of the virus progeny occurs after association of protein Z with the viral glycoprotein complex SSP-GP1-GP2 at the cell periphery, step that requires myristoylation of protein Z. Also selectively represses protein production by associating with host eIF4E. In cell-based minigenome assay, has an inhibitory effect on the ribonucleoprotein machinery (vRNP), which is responsible for the replication and transcription of the viral genome. The protein is RING finger protein Z of Guanarito mammarenavirus (isolate Human/Venezuela/NH-95551/1990) (GTOV).